A 344-amino-acid chain; its full sequence is Serine proteinase inhibitor 2 (344 aa).

The protein belongs to the serpin family. Poxviruses subfamily.

The protein resides in the host cytoplasm. Viral serpin that inhibits both cysteine and serine proteinases involved in the regulation of host inflammatory and apoptosis processes. Major anti-apoptotic protein which inhibits both intrinsic and extrinsic pathways and strongly cleaves host CASP1 and CASP8 but is a rather poor inhibitor of host CASP3. Prevents the proteolytic activity of host interleukin-1-beta converting enzyme (ICE) and ICE-like enzymes. Can also block apoptosis through host tumor necrosis factor (TNF) receptor. The inhibition of host ICE is an example of a 'cross-class' interaction, in which a serpin inhibits a non-serine proteinase. Also inhibits granzyme B. The polypeptide is Serine proteinase inhibitor 2 (OPG199) (Homo sapiens (Human)).